The chain runs to 61 residues: MNKLSLVLVAGFLLVGCASESVKDPDALPNGIMQPVEGTGAVAGGSFMPEIQKNTIPTQMK.

This is an uncharacterized protein from Haemophilus influenzae (strain ATCC 51907 / DSM 11121 / KW20 / Rd).